The following is a 299-amino-acid chain: Recombination-associated protein RdgC (299 aa).

This sequence belongs to the RdgC family.

The protein localises to the cytoplasm. It is found in the nucleoid. Its function is as follows. May be involved in recombination. The sequence is that of Recombination-associated protein RdgC from Cupriavidus necator (strain ATCC 17699 / DSM 428 / KCTC 22496 / NCIMB 10442 / H16 / Stanier 337) (Ralstonia eutropha).